Here is a 557-residue protein sequence, read N- to C-terminus: Formate--tetrahydrofolate ligase (557 aa).

An ATP-binding site is contributed by threonine 65–threonine 72.

This sequence belongs to the formate--tetrahydrofolate ligase family. As to quaternary structure, homotetramer.

It carries out the reaction (6S)-5,6,7,8-tetrahydrofolate + formate + ATP = (6R)-10-formyltetrahydrofolate + ADP + phosphate. Its pathway is one-carbon metabolism; tetrahydrofolate interconversion. The chain is Formate--tetrahydrofolate ligase (fhs) from Methylorubrum extorquens (strain ATCC 14718 / DSM 1338 / JCM 2805 / NCIMB 9133 / AM1) (Methylobacterium extorquens).